The sequence spans 593 residues: Scarecrow-like protein 1 (593 aa).

Disordered stretches follow at residues 29–61 (NPKL…PCLT) and 188–216 (YQNE…SKEV). Positions 35–48 (LNENGNNNGVSSAQ) are enriched in polar residues. Residues 202–211 (SSSADSNSHV) show a composition bias toward low complexity. Positions 213–593 (SKEVVSQATP…KSLIVASAWR (381 aa)) constitute a GRAS domain. Positions 220 to 280 (ATPKQILISC…AARMAASGKF (61 aa)) are leucine repeat I (LRI). Residues 299 to 364 (MQVLFEVCPC…GKRPRLRLTG (66 aa)) form a VHIID region. The short motif at 330–334 (VHIID) is the VHIID element. The leucine repeat II (LRII) stretch occupies residues 380 to 411 (IIGLRLEQLAEDNGVSFKFKAMPSKTSIVSPS). A PFYRE region spans residues 421–515 (LIVNFAFQLH…RQCLARDIVN (95 aa)). The SAW stretch occupies residues 518-593 (ACEGEERIER…KSLIVASAWR (76 aa)).

This sequence belongs to the GRAS family. In terms of tissue distribution, expressed in seedlings, roots, shoots, leaves, flowers and siliques.

The protein resides in the nucleus. Probable transcription factor involved in plant development. The protein is Scarecrow-like protein 1 (SCL1) of Arabidopsis thaliana (Mouse-ear cress).